The following is a 405-amino-acid chain: Tryptophan synthase beta chain (405 aa).

K98 is subject to N6-(pyridoxal phosphate)lysine.

It belongs to the TrpB family. Tetramer of two alpha and two beta chains. It depends on pyridoxal 5'-phosphate as a cofactor.

It catalyses the reaction (1S,2R)-1-C-(indol-3-yl)glycerol 3-phosphate + L-serine = D-glyceraldehyde 3-phosphate + L-tryptophan + H2O. It functions in the pathway amino-acid biosynthesis; L-tryptophan biosynthesis; L-tryptophan from chorismate: step 5/5. Its function is as follows. The beta subunit is responsible for the synthesis of L-tryptophan from indole and L-serine. The sequence is that of Tryptophan synthase beta chain from Parvibaculum lavamentivorans (strain DS-1 / DSM 13023 / NCIMB 13966).